Consider the following 190-residue polypeptide: Translation machinery-associated protein 22 (190 aa).

The tract at residues 63–83 (LNVSGTKDSNAEEQPAKLTKE) is disordered. One can recognise an SUI1 domain in the interval 99–170 (VLIKTIERTK…DIFDFILEKF (72 aa)).

This sequence belongs to the DENR family. As to quaternary structure, interacts with the 40S ribosomal subunit.

Its subcellular location is the cytoplasm. The protein is Translation machinery-associated protein 22 (tma22) of Schizosaccharomyces pombe (strain 972 / ATCC 24843) (Fission yeast).